A 362-amino-acid chain; its full sequence is Class I histocompatibility antigen, Gogo-B*0101 alpha chain (362 aa).

The N-terminal stretch at 1-24 (MRVTAPRTLLLLLSAALALTETWA) is a signal peptide. Residues 25-114 (GSHSMRYFDT…ALRYYNQSEA (90 aa)) are alpha-1. Over 25–308 (GSHSMRYFDT…EPSSQSTIPI (284 aa)) the chain is Extracellular. Residue N110 is glycosylated (N-linked (GlcNAc...) asparagine). The segment at 115–206 (GSHTIQRMFG…ENGRETLQRA (92 aa)) is alpha-2. Intrachain disulfides connect C125/C188 and C227/C283. The interval 207–298 (DTPKTHVTHH…GLPKPLTLRW (92 aa)) is alpha-3. Positions 209–295 (PKTHVTHHPI…QHEGLPKPLT (87 aa)) constitute an Ig-like C1-type domain. Residues 299–308 (EPSSQSTIPI) are connecting peptide. A helical transmembrane segment spans residues 309-332 (VGIVAGLAVLAVVVIGAVVTAVIC). The Cytoplasmic segment spans residues 333–362 (RRKSSGGKGGSYSQAASSDSAQGSDVSLTA). A disordered region spans residues 335–362 (KSSGGKGGSYSQAASSDSAQGSDVSLTA). Over residues 343 to 362 (SYSQAASSDSAQGSDVSLTA) the composition is skewed to low complexity. S356 and S359 each carry phosphoserine.

Belongs to the MHC class I family. In terms of assembly, heterodimer of an alpha chain and a beta chain (beta-2-microglobulin).

It is found in the membrane. Functionally, involved in the presentation of foreign antigens to the immune system. This Gorilla gorilla gorilla (Western lowland gorilla) protein is Class I histocompatibility antigen, Gogo-B*0101 alpha chain.